A 219-amino-acid polypeptide reads, in one-letter code: uncharacterized protein (219 aa).

A run of 2 helical transmembrane segments spans residues 81–101 (VVKWFIIVDPLINSILINYLI) and 168–188 (PIMEIQMVAVPLALPSPTALV).

It localises to the membrane. This is an uncharacterized protein from Saccharomyces cerevisiae (strain ATCC 204508 / S288c) (Baker's yeast).